Here is a 468-residue protein sequence, read N- to C-terminus: Cyclin-dependent kinase 14 (468 aa).

Phosphoserine is present on residues serine 24, serine 77, and serine 94. Positions 102–131 are disordered; that stretch reads FKSSSAGKESPKVRRHSSPSSPTSPKFGKA. Residue serine 133 is modified to Phosphoserine. In terms of domain architecture, Protein kinase spans 134-418; the sequence is YEKLEKLGEG…AQAALSHEYF (285 aa). ATP contacts are provided by residues 140–148 and lysine 163; that span reads LGEGSYATV. Aspartate 255 (proton acceptor) is an active-site residue. The segment at 448-468 is disordered; that stretch reads ESMRAFGKNSSYGKSLSNSKH. Over residues 455–468 the composition is skewed to polar residues; that stretch reads KNSSYGKSLSNSKH.

Belongs to the protein kinase superfamily. CMGC Ser/Thr protein kinase family. CDC2/CDKX subfamily. As to quaternary structure, found in a complex with LRP6, CCNY and CAPRIN2 during G2/M stage; CAPRIN2 functions as a scaffold for the complex by binding to CCNY via its N terminus and to CDK14 via its C terminus. Interacts with CCNY; CCNY mediates its recruitment to the plasma membrane and promotes phosphorylation of LRP6. Interacts with CCDN3 and CDKN1A. Interacts with SEPT8. Interacts with 14-3-3 proteina YWHAB, YWHAE, YWHAH and YWHAQ.

The protein resides in the cell membrane. Its subcellular location is the cytoplasm. It localises to the nucleus. The catalysed reaction is L-seryl-[protein] + ATP = O-phospho-L-seryl-[protein] + ADP + H(+). It catalyses the reaction L-threonyl-[protein] + ATP = O-phospho-L-threonyl-[protein] + ADP + H(+). Serine/threonine-protein kinase activity is promoted by associated cyclins CCDN3 and CCNY and repressed by CDKN1A. In terms of biological role, serine/threonine-protein kinase involved in the control of the eukaryotic cell cycle, whose activity is controlled by an associated cyclin. Acts as a cell-cycle regulator of Wnt signaling pathway during G2/M phase by mediating the phosphorylation of LRP6 at 'Ser-1490', leading to the activation of the Wnt signaling pathway. Acts as a regulator of cell cycle progression and cell proliferation via its interaction with CCDN3. Phosphorylates RB1 in vitro, however the relevance of such result remains to be confirmed in vivo. May also play a role in meiosis, neuron differentiation and may indirectly act as a negative regulator of insulin-responsive glucose transport. This is Cyclin-dependent kinase 14 (CDK14) from Oryctolagus cuniculus (Rabbit).